The chain runs to 607 residues: Arginine--tRNA ligase, cytoplasmic (607 aa).

Ala-2 is subject to N-acetylalanine. Ser-15 carries the post-translational modification Phosphoserine. Interaction with tRNA stretches follow at residues 59–60 (EW) and 106–111 (NGPFIQ). Residues 148-153 (EFSSPN), His-162, Tyr-347, Asp-351, and Gln-375 each bind L-arginine. Residues 151–162 (SPNIAKPFHAGH) carry the 'HIGH' region motif. The segment at 484–498 (DTGPYLQYAHSRLRS) is interaction with tRNA.

This sequence belongs to the class-I aminoacyl-tRNA synthetase family. In terms of assembly, monomer.

Its subcellular location is the cytoplasm. The protein resides in the cytosol. It catalyses the reaction tRNA(Arg) + L-arginine + ATP = L-arginyl-tRNA(Arg) + AMP + diphosphate. Forms part of a macromolecular complex that catalyzes the attachment of specific amino acids to cognate tRNAs during protein synthesis. The chain is Arginine--tRNA ligase, cytoplasmic from Saccharomyces cerevisiae (strain ATCC 204508 / S288c) (Baker's yeast).